The sequence spans 341 residues: Tubulin-specific chaperone C (341 aa).

Met1 is modified (N-acetylmethionine). Positions 34-49 are enriched in basic and acidic residues; that stretch reads ERQIEVERRKQKRQDQ. Residues 34–55 are disordered; the sequence is ERQIEVERRKQKRQDQEVEEEK. Ser79 carries the post-translational modification Phosphoserine. The segment at 148 to 173 is disordered; that stretch reads TAQVDAAPVTSAAPSPPVTKEEEGAP. Residues 163-318 form the C-CAP/cofactor C-like domain; sequence PPVTKEEEGA…NWDQVDDFNW (156 aa).

The protein belongs to the TBCC family. As to quaternary structure, supercomplex made of cofactors A to E. Cofactors A and D function by capturing and stabilizing tubulin in a quasi-native conformation. Cofactor E binds to the cofactor D-tubulin complex; interaction with cofactor C then causes the release of tubulin polypeptides that are committed to the native state.

It localises to the cytoplasm. Functionally, tubulin-folding protein; involved in the final step of the tubulin folding pathway. The polypeptide is Tubulin-specific chaperone C (Tbcc) (Mus musculus (Mouse)).